We begin with the raw amino-acid sequence, 163 residues long: uncharacterized protein (163 aa).

Expressed in keratinocytes.

This is an uncharacterized protein from Homo sapiens (Human).